A 688-amino-acid chain; its full sequence is Glycine--tRNA ligase beta subunit (688 aa).

This sequence belongs to the class-II aminoacyl-tRNA synthetase family. As to quaternary structure, tetramer of two alpha and two beta subunits.

The protein resides in the cytoplasm. The enzyme catalyses tRNA(Gly) + glycine + ATP = glycyl-tRNA(Gly) + AMP + diphosphate. The chain is Glycine--tRNA ligase beta subunit from Desulforudis audaxviator (strain MP104C).